Here is a 154-residue protein sequence, read N- to C-terminus: Protein X (154 aa).

Residues 68–117 (PCALRFTSARRMETTVNAHQILPKVLHKRTLGLSAMSTTDLEAYFKDCLF) are mitochondrial targeting sequence.

This sequence belongs to the orthohepadnavirus protein X family. As to quaternary structure, may form homodimer. May interact with host CEBPA, CFLAR, CREB1, DDB1, E4F1, HBXIP, HSPD1/HSP60, NFKBIA, POLR2E and SMAD4. Interacts with host SMC5-SMC6 complex and induces its degradation. Interacts with host TRPC4AP; leading to prevent ubiquitination of TRPC4AP. Interacts with host PLSCR1; this interaction promotes ubiquitination and degradation of HBx and impairs HBx-mediated cell proliferation. Post-translationally, a fraction may be phosphorylated in insect cells and HepG2 cells, a human hepatoblastoma cell line. Phosphorylated in vitro by host protein kinase C or mitogen-activated protein kinase. N-acetylated in insect cells.

It localises to the host cytoplasm. The protein resides in the host nucleus. Its subcellular location is the host mitochondrion. Functionally, multifunctional protein that plays a role in silencing host antiviral defenses and promoting viral transcription. Does not seem to be essential for HBV infection. May be directly involved in development of cirrhosis and liver cancer (hepatocellular carcinoma). Most of cytosolic activities involve modulation of cytosolic calcium. The effect on apoptosis is controversial depending on the cell types in which the studies have been conducted. May induce apoptosis by localizing in mitochondria and causing loss of mitochondrial membrane potential. May also modulate apoptosis by binding host CFLAR, a key regulator of the death-inducing signaling complex (DISC). Promotes viral transcription by using the host E3 ubiquitin ligase DDB1 to target the SMC5-SMC6 complex to proteasomal degradation. This host complex would otherwise bind to viral episomal DNA, and prevents its transcription. Moderately stimulates transcription of many different viral and cellular transcription elements. Promoters and enhancers stimulated by HBx contain DNA binding sites for NF-kappa-B, AP-1, AP-2, c-EBP, ATF/CREB, or the calcium-activated factor NF-AT. This is Protein X from Hepatitis B virus genotype E subtype ayw4 (isolate Kou) (HBV-E).